Here is a 432-residue protein sequence, read N- to C-terminus: D-amino acid dehydrogenase (432 aa).

An FAD-binding site is contributed by 3–17 (VVILGSGVVGVTSAW).

Belongs to the DadA oxidoreductase family. FAD is required as a cofactor.

It catalyses the reaction a D-alpha-amino acid + A + H2O = a 2-oxocarboxylate + AH2 + NH4(+). It participates in amino-acid degradation; D-alanine degradation; NH(3) and pyruvate from D-alanine: step 1/1. Oxidative deamination of D-amino acids. This Escherichia fergusonii (strain ATCC 35469 / DSM 13698 / CCUG 18766 / IAM 14443 / JCM 21226 / LMG 7866 / NBRC 102419 / NCTC 12128 / CDC 0568-73) protein is D-amino acid dehydrogenase.